The primary structure comprises 123 residues: Urotensin-2 (123 aa).

A signal peptide spans 1-20; sequence MDRVPFCCLLFVGLLNPLLS. A propeptide spanning residues 21–104 is cleaved from the precursor; it reads FPVTDTGEMS…TVLSRLLART (84 aa). The disordered stretch occupies residues 63-91; that stretch reads EAEGSLGQADPSAETPTPRGSLRKALTGQ. Cysteine 117 and cysteine 122 are joined by a disulfide.

The protein belongs to the urotensin-2 family. In terms of tissue distribution, brain specific.

The protein resides in the secreted. Its function is as follows. Highly potent vasoconstrictor. This chain is Urotensin-2 (Uts2), found in Rattus norvegicus (Rat).